The chain runs to 303 residues: UDP-3-O-acyl-N-acetylglucosamine deacetylase (303 aa).

Residues His78, His237, and Asp241 each coordinate Zn(2+). The active-site Proton donor is the His264.

It belongs to the LpxC family. It depends on Zn(2+) as a cofactor.

The catalysed reaction is a UDP-3-O-[(3R)-3-hydroxyacyl]-N-acetyl-alpha-D-glucosamine + H2O = a UDP-3-O-[(3R)-3-hydroxyacyl]-alpha-D-glucosamine + acetate. The protein operates within glycolipid biosynthesis; lipid IV(A) biosynthesis; lipid IV(A) from (3R)-3-hydroxytetradecanoyl-[acyl-carrier-protein] and UDP-N-acetyl-alpha-D-glucosamine: step 2/6. In terms of biological role, catalyzes the hydrolysis of UDP-3-O-myristoyl-N-acetylglucosamine to form UDP-3-O-myristoylglucosamine and acetate, the committed step in lipid A biosynthesis. This is UDP-3-O-acyl-N-acetylglucosamine deacetylase from Stenotrophomonas maltophilia (strain K279a).